The sequence spans 557 residues: Tryptophan 2-monooxygenase (557 aa).

FMN contacts are provided by Ser-49, Glu-69, Arg-71, Arg-77, and Arg-98. Arg-98 contributes to the substrate binding site.

The protein belongs to the tryptophan 2-monooxygenase family. As to quaternary structure, monomer. It depends on FMN as a cofactor.

The enzyme catalyses L-tryptophan + O2 = indole-3-acetamide + CO2 + H2O. It functions in the pathway plant hormone metabolism; auxin biosynthesis. The chain is Tryptophan 2-monooxygenase (iaaM) from Pseudomonas savastanoi (Pseudomonas syringae pv. savastanoi).